The chain runs to 170 residues: Zinc finger A20 and AN1 domain-containing stress-associated protein 6 (170 aa).

An A20-type zinc finger spans residues 10–44 (PESNRLCVNNCGFLGSSATMNLCSNCYGDLCLKQQ). The Zn(2+) site is built by cysteine 16, cysteine 20, cysteine 32, and cysteine 35. Residues 53–76 (TVESSLSVSPPSSSSSEISSPIIP) form a disordered region. The AN1-type zinc-finger motif lies at 105-151 (QQRPNRCTTCRKRVGLTGFKCRCGTMFCGVHRYPEIHGCSYDFKSAG). Cysteine 111, cysteine 114, cysteine 125, cysteine 127, cysteine 132, histidine 135, histidine 141, and cysteine 143 together coordinate Zn(2+).

In terms of biological role, may be involved in environmental stress response. This Arabidopsis thaliana (Mouse-ear cress) protein is Zinc finger A20 and AN1 domain-containing stress-associated protein 6 (SAP6).